A 366-amino-acid polypeptide reads, in one-letter code: 3-isopropylmalate dehydrogenase (366 aa).

76–89 (GPKWDHNPASLRPE) provides a ligand contact to NAD(+). Residues Arg-96, Arg-106, Arg-134, and Asp-222 each coordinate substrate. The Mg(2+) site is built by Asp-222, Asp-246, and Asp-250. 280-292 (GSAPDIAGQGKAN) provides a ligand contact to NAD(+).

This sequence belongs to the isocitrate and isopropylmalate dehydrogenases family. LeuB type 1 subfamily. As to quaternary structure, homodimer. Requires Mg(2+) as cofactor. Mn(2+) is required as a cofactor.

It localises to the cytoplasm. It catalyses the reaction (2R,3S)-3-isopropylmalate + NAD(+) = 4-methyl-2-oxopentanoate + CO2 + NADH. The protein operates within amino-acid biosynthesis; L-leucine biosynthesis; L-leucine from 3-methyl-2-oxobutanoate: step 3/4. In terms of biological role, catalyzes the oxidation of 3-carboxy-2-hydroxy-4-methylpentanoate (3-isopropylmalate) to 3-carboxy-4-methyl-2-oxopentanoate. The product decarboxylates to 4-methyl-2 oxopentanoate. The sequence is that of 3-isopropylmalate dehydrogenase (leuB) from Heyndrickxia coagulans (Weizmannia coagulans).